The following is a 342-amino-acid chain: Outer membrane porin C (342 aa).

Belongs to the Gram-negative porin family. In terms of assembly, homotrimer.

Its subcellular location is the cell outer membrane. Forms pores that allow passive diffusion of small molecules across the outer membrane. In R.aquatilis OmpC is involved in the adhesion to wheat roots. The protein is Outer membrane porin C (ompC) of Rahnella aquatilis.